The sequence spans 413 residues: Gamma-glutamyl phosphate reductase (413 aa).

It belongs to the gamma-glutamyl phosphate reductase family.

It localises to the cytoplasm. The enzyme catalyses L-glutamate 5-semialdehyde + phosphate + NADP(+) = L-glutamyl 5-phosphate + NADPH + H(+). It participates in amino-acid biosynthesis; L-proline biosynthesis; L-glutamate 5-semialdehyde from L-glutamate: step 2/2. In terms of biological role, catalyzes the NADPH-dependent reduction of L-glutamate 5-phosphate into L-glutamate 5-semialdehyde and phosphate. The product spontaneously undergoes cyclization to form 1-pyrroline-5-carboxylate. The chain is Gamma-glutamyl phosphate reductase from Thermus thermophilus (strain ATCC 27634 / DSM 579 / HB8).